Here is a 248-residue protein sequence, read N- to C-terminus: Probable transcriptional regulatory protein RHOS4_22610 (248 aa).

Residues 1-21 are disordered; the sequence is MAGHSKWANIQHRKGKQDKLR.

The protein belongs to the TACO1 family.

It is found in the cytoplasm. This Cereibacter sphaeroides (strain ATCC 17023 / DSM 158 / JCM 6121 / CCUG 31486 / LMG 2827 / NBRC 12203 / NCIMB 8253 / ATH 2.4.1.) (Rhodobacter sphaeroides) protein is Probable transcriptional regulatory protein RHOS4_22610.